We begin with the raw amino-acid sequence, 427 residues long: ATP-dependent RNA helicase DDX39A (427 aa).

Residues 1–19 show a composition bias toward acidic residues; sequence MAEQDVENDLLDYDEEEEP. The disordered stretch occupies residues 1-34; the sequence is MAEQDVENDLLDYDEEEEPQAPQESTPAPPKKDI. Residue Ala-2 is modified to N-acetylalanine. Residue Lys-31 forms a Glycyl lysine isopeptide (Lys-Gly) (interchain with G-Cter in SUMO2) linkage. An N6-acetyllysine; alternate modification is found at Lys-35. Lys-35 is covalently cross-linked (Glycyl lysine isopeptide (Lys-Gly) (interchain with G-Cter in SUMO2); alternate). Residue Ser-37 is modified to Phosphoserine. The short motif at 44–72 is the Q motif element; it reads SGFRDFLLKPELLRAIVDCGFEHPSEVQH. The Helicase ATP-binding domain maps to 75–248; that stretch reads IPQAILGMDV…RKFMQDPMEV (174 aa). Residue 88 to 95 coordinates ATP; sequence AKSGMGKT. Residues Lys-154 and Lys-162 each participate in a glycyl lysine isopeptide (Lys-Gly) (interchain with G-Cter in SUMO2) cross-link. The residue at position 171 (Thr-171) is a Phosphothreonine. Residues 195 to 198 carry the DECD box motif; it reads DECD. Residues Lys-240 and Lys-255 each participate in a glycyl lysine isopeptide (Lys-Gly) (interchain with G-Cter in SUMO2) cross-link. A Helicase C-terminal domain is found at 260–421; it reads GLQQYYVKLK…ELPEEIDIST (162 aa). Position 426 is a phosphoserine (Ser-426).

This sequence belongs to the DEAD box helicase family. DECD subfamily. As to quaternary structure, binds ALYREF/THOC4 and DDX39B/BAT1. Interacts with the apo-AREX complex component SARNP. Interacts with MX1. Interacts with MCM3AP isoform GANP. Interacts with ECD. Interacts with PHAX; this interaction stimulates PHAX RNA binding activity. In terms of assembly, (Microbial infection) Interacts with human cytomegalovirus/HHV-5 protein UL69. Post-translationally, SUMOylated by RANBP2; SUMOylation modification affects its ability to bind RNA. As to expression, detected in testis, and at lower levels in brain, kidney, lung, thymus, spleen and salivary gland.

The protein resides in the nucleus. The protein localises to the cytoplasm. It catalyses the reaction ATP + H2O = ADP + phosphate + H(+). Functionally, helicase that plays an essential role in mRNA export and is involved in multiple steps in RNA metabolism including alternative splicing. Regulates nuclear mRNA export to the cytoplasm through association with ECD. Also involved in spliceosomal uridine-rich small nuclear RNA (U snRNA) export by stimulating the RNA binding of adapter PHAX. Plays a role in the negative regulation of type I IFN production by increasing the nuclear retention of antiviral transcripts and thus reducing their protein expression. Independently of the interferon pathway, plays an antiviral role against alphaviruses by binding to a 5' conserved sequence element in the viral genomic RNA. This Homo sapiens (Human) protein is ATP-dependent RNA helicase DDX39A (DDX39A).